A 637-amino-acid chain; its full sequence is Chaperone protein DnaK (637 aa).

Phosphothreonine; by autocatalysis is present on Thr198. Positions Ile600–Lys637 are disordered. The segment covering Ala601–Gln618 has biased composition (low complexity). The segment covering Asp623–Lys637 has biased composition (acidic residues).

This sequence belongs to the heat shock protein 70 family.

In terms of biological role, acts as a chaperone. This chain is Chaperone protein DnaK, found in Vibrio parahaemolyticus serotype O3:K6 (strain RIMD 2210633).